Reading from the N-terminus, the 452-residue chain is Phenylalanine-4-hydroxylase (452 aa).

Position 16 is a phosphoserine; by PKA (S16). Residues 36–114 form the ACT domain; it reads SLIFSLKEEV…TVHELSRDKK (79 aa). Residues H285, H290, and E330 each coordinate Fe cation.

This sequence belongs to the biopterin-dependent aromatic amino acid hydroxylase family. As to quaternary structure, homodimer and homotetramer. Fe(2+) serves as cofactor. Post-translationally, phosphorylation at Ser-16 increases basal activity and facilitates activation by the substrate phenylalanine.

It catalyses the reaction (6R)-L-erythro-5,6,7,8-tetrahydrobiopterin + L-phenylalanine + O2 = (4aS,6R)-4a-hydroxy-L-erythro-5,6,7,8-tetrahydrobiopterin + L-tyrosine. The protein operates within amino-acid degradation; L-phenylalanine degradation; acetoacetate and fumarate from L-phenylalanine: step 1/6. With respect to regulation, N-terminal region of PAH is thought to contain allosteric binding sites for phenylalanine and to constitute an 'inhibitory' domain that regulates the activity of a catalytic domain in the C-terminal portion of the molecule. Functionally, catalyzes the hydroxylation of L-phenylalanine to L-tyrosine. This chain is Phenylalanine-4-hydroxylase (PAH), found in Homo sapiens (Human).